The sequence spans 334 residues: Heat shock factor 2-binding protein (334 aa).

Positions 14–51 (MGTKEEFVKVRKKDLERLTTEVMQIRDFLPRILNGEVL) are interaction with BRME1. A coiled-coil region spans residues 49–122 (EVLESFQKLK…LLQQAEYCTE (74 aa)). Residues 83–334 (ARLETVQADN…EDLRTLEHNV (252 aa)) form an interaction with BRCA2 region.

As to quaternary structure, associates with HSF2. The interaction seems to occur between the trimerization domain of HSF2 and the N-terminal hydrophilic region of HSF2BP. Interacts (via C-terminus) with BNC1. Interacts (via N-terminus) with BRCA2 and BRME1; the interactions are direct and allow the formation of a ternary complex. The complex BRME1:HSF2BP:BRCA2 interacts with SPATA22, MEIOB and RAD51. Post-translationally, sumoylated by UBE2I in response to MEKK1-mediated stimuli. In terms of tissue distribution, testis specific. Overexpressed in some tumors.

Its subcellular location is the cytoplasm. The protein resides in the chromosome. Functionally, meiotic recombination factor component of recombination bridges involved in meiotic double-strand break repair. Modulates the localization of recombinases DMC1:RAD51 to meiotic double-strand break (DSB) sites through the interaction with BRCA2 and its recruitment during meiotic recombination. Indispensable for the DSB repair, homologous synapsis, and crossover formation that are needed for progression past metaphase I, is essential for spermatogenesis and male fertility. Required for proper recombinase recruitment in female meiosis. Inhibits BNC1 transcriptional activity during spermatogenesis, probably by sequestering it in the cytoplasm. May be involved in modulating HSF2 activation in testis. In Homo sapiens (Human), this protein is Heat shock factor 2-binding protein.